We begin with the raw amino-acid sequence, 445 residues long: 2-oxoisovalerate dehydrogenase subunit alpha, mitochondrial (445 aa).

The transit peptide at M1–F45 directs the protein to the mitochondrion. Residues Y158 and R159 each contribute to the thiamine diphosphate site. S206 serves as a coordination point for K(+). S207 serves as a coordination point for thiamine diphosphate. Residues P208, T211, and Q212 each contribute to the K(+) site. E238 is a binding site for Mg(2+). Residues G239, A240, and R265 each contribute to the thiamine diphosphate site. Mg(2+)-binding residues include N267 and Y269. H336 serves as a coordination point for thiamine diphosphate. S337 bears the Phosphoserine; by BCKDK mark. T338 carries the phosphothreonine modification. Residues S339 and S347 each carry the phosphoserine modification. The residue at position 356 (K356) is an N6-acetyllysine; alternate. K356 carries the post-translational modification N6-succinyllysine; alternate. Residue K380 is modified to N6-succinyllysine.

The protein belongs to the BCKDHA family. As to quaternary structure, heterotetramer of 2 alpha/BCKDHA and 2 beta chains/BCKDHB that forms the branched-chain alpha-keto acid decarboxylase (E1) component of the BCKD complex. The branched-chain alpha-ketoacid dehydrogenase is a large complex composed of three major building blocks E1, E2 and E3. It is organized around E2, a 24-meric cubic core composed of DBT, to which are associated 6 to 12 copies of E1, and approximately 6 copies of the dehydrogenase E3, a DLD dimer. Interacts with PPM1K. Thiamine diphosphate serves as cofactor. The cofactor is Mg(2+). Post-translationally, phosphorylated at Ser-337 by BCKDK and dephosphorylated by protein phosphatase PPM1K.

The protein localises to the mitochondrion matrix. The enzyme catalyses N(6)-[(R)-lipoyl]-L-lysyl-[protein] + 3-methyl-2-oxobutanoate + H(+) = N(6)-[(R)-S(8)-2-methylpropanoyldihydrolipoyl]-L-lysyl-[protein] + CO2. Its function is as follows. Together with BCKDHB forms the heterotetrameric E1 subunit of the mitochondrial branched-chain alpha-ketoacid dehydrogenase (BCKD) complex. The BCKD complex catalyzes the multi-step oxidative decarboxylation of alpha-ketoacids derived from the branched-chain amino-acids valine, leucine and isoleucine producing CO2 and acyl-CoA which is subsequently utilized to produce energy. The E1 subunit catalyzes the first step with the decarboxylation of the alpha-ketoacid forming an enzyme-product intermediate. A reductive acylation mediated by the lipoylamide cofactor of E2 extracts the acyl group from the E1 active site for the next step of the reaction. The protein is 2-oxoisovalerate dehydrogenase subunit alpha, mitochondrial (BCKDHA) of Macaca fascicularis (Crab-eating macaque).